The primary structure comprises 522 residues: MALANSRPLQIPTLENEILHNSNSPVFQLNSMGFTTRADTISNPGTDLIGNQPGMALDDNNLAGSSFSSSQEIKATKPKKDFGAPKKDNPLLEISKLIPVTGERPKPENRDSPLDDDVLHAVFLILWEMDPNQQGMTVKQLCDLLLQKHPDMSNLSTKLSNLISAKLNAYVKKIEKGEKTLTYALSREWSNSSPRRMLYIYRGILSPDYKEHAQAVTMQLKQQLETSGDTSDFNSNGKKKRESSSNQLVNNDSYSSSMTDMKNMSSNSSFSKNLNVGNLAFSLSPEFNIPYSTSPVSLNLSPSMSNNQQQLLTPNSASKSKNNNKKRNYMDEDTNESMTEPKKTKTTKPGKQTKSQSLSVLSTPKKGSSASLSTFASSKNISPDSSLSHNASSNTYVTAAAAAPRLSKLLPKNGFKKNSRSSSELAAIHKVISTQTPIESSSESSQYNSSSSSPVNSAAASSAESLSDINSSQDNGRESNPSSQESRNEVTNWMKIVRNGFLTHDIESPESITLDDLENIFN.

Disordered stretches follow at residues A56–D88, Q222–S268, L300–A391, and S433–E489. Residues L62 to I73 show a composition bias toward polar residues. A compositionally biased stretch (basic and acidic residues) spans K74 to D88. Polar residues-rich tracts occupy residues Q222–N236, S244–D260, L300–P314, and S355–K366. Over residues S368–S378 the composition is skewed to low complexity. Residues K379 to A391 show a composition bias toward polar residues. The segment covering E439–S467 has biased composition (low complexity). The span at D468–E489 shows a compositional bias: polar residues.

Its function is as follows. Involved in nuclear control of mitochondria. This is Protein GDS1 (GDS1) from Saccharomyces cerevisiae (strain ATCC 204508 / S288c) (Baker's yeast).